Consider the following 88-residue polypeptide: Small ribosomal subunit protein bS16 (88 aa).

The protein belongs to the bacterial ribosomal protein bS16 family.

The protein is Small ribosomal subunit protein bS16 of Sorangium cellulosum (strain So ce56) (Polyangium cellulosum (strain So ce56)).